Reading from the N-terminus, the 53-residue chain is Neuronal protein NP-190 (53 aa).

Mainly expressed in the fetal brain where it is specifically localized to the proximal axonal segments, cell bodies and growth cones. Lower level of expression was also detected in the fetal heart and the skeletal muscle. No expression in kidney, liver, lung or spleen.

The protein localises to the membrane. Neuronal antigen that may play a role in brain development. May be involved in neurite formation or axonal guidance. In Sus scrofa (Pig), this protein is Neuronal protein NP-190.